Reading from the N-terminus, the 399-residue chain is Centrosomal protein 43 (399 aa).

Residues 70 to 102 (DGRLVASLVAEFLQFFNLDFTLAVFQPETSTFQ) form the LisH domain. T143 carries the phosphothreonine modification. Positions 143 to 311 (TSGEGALDLS…LKESESKRGN (169 aa)) are disordered. S152, S156, S160, and S202 each carry phosphoserine. The span at 197–209 (NDASHSDTSISSS) shows a compositional bias: low complexity. A compositionally biased stretch (acidic residues) spans 245–256 (PEEDDLEGDSFF). The segment covering 286–302 (APPLKSGLSSLAGAPSL) has biased composition (low complexity). A phosphoserine mark is found at S301 and S326. Residues 328–357 (GLGTGEEDDYVDDFNSTSHRSEKSELSIGE) form a disordered region. Residue Y337 is modified to Phosphotyrosine.

It belongs to the CEP43 family. Homodimer. Part of a ternary complex that contains CEP350, CEP43 and MAPRE1. Interacts directly with CEP350 and MAPRE1. Interacts with CEP19. Interacts (via N-terminus) with CEP350 (via C-terminus).

Its subcellular location is the cytoplasm. It is found in the cytoskeleton. The protein localises to the microtubule organizing center. The protein resides in the centrosome. It localises to the centriole. Its subcellular location is the cilium basal body. Functionally, required for anchoring microtubules to the centrosomes. Required for ciliation. The sequence is that of Centrosomal protein 43 (CEP43) from Bos taurus (Bovine).